The chain runs to 356 residues: S-adenosylmethionine:tRNA ribosyltransferase-isomerase (356 aa).

The protein belongs to the QueA family. In terms of assembly, monomer.

The protein localises to the cytoplasm. The enzyme catalyses 7-aminomethyl-7-carbaguanosine(34) in tRNA + S-adenosyl-L-methionine = epoxyqueuosine(34) in tRNA + adenine + L-methionine + 2 H(+). It participates in tRNA modification; tRNA-queuosine biosynthesis. Transfers and isomerizes the ribose moiety from AdoMet to the 7-aminomethyl group of 7-deazaguanine (preQ1-tRNA) to give epoxyqueuosine (oQ-tRNA). The protein is S-adenosylmethionine:tRNA ribosyltransferase-isomerase of Xanthomonas euvesicatoria pv. vesicatoria (strain 85-10) (Xanthomonas campestris pv. vesicatoria).